Reading from the N-terminus, the 332-residue chain is MNLVNNFSKLFPRCLTTGLYLWSLYAIVVCIHVIRARVVLPLVFTIAMVALYTYAKLIYVGPGTTKEYSILRVYDLNAAESGFELPPEMLVKRSYTQKRNGRFRVCKSCSSWKPDRCHHCSTCNVCVLKMDHHCPWFAGCVGYRNQKFFIQFLIYCTVYSILVLILSSMEIYTWFKGEFFEVELINFTLLSLWLLALVVSISITIFTVFSISQVCQNQTTIELYSLRRYNEEVAFLNEFSNEPIKGTINIFDLGKKLINWEEVMGYSLIEWALPISRRPSSLDLEGSHSHGLFFNVNKNVSKTMNESVDLQDRLLRRLTPRSSLDVDRSNFV.

At 1–13 the chain is on the cytoplasmic side; that stretch reads MNLVNNFSKLFPR. Residues 14 to 34 form a helical membrane-spanning segment; that stretch reads CLTTGLYLWSLYAIVVCIHVI. Topologically, residues 35 to 37 are lumenal; it reads RAR. Residues 38–58 form a helical membrane-spanning segment; sequence VVLPLVFTIAMVALYTYAKLI. Topologically, residues 59-147 are cytoplasmic; the sequence is YVGPGTTKEY…AGCVGYRNQK (89 aa). The DHHC domain maps to 104–154; it reads RVCKSCSSWKPDRCHHCSTCNVCVLKMDHHCPWFAGCVGYRNQKFFIQFLI. The chain crosses the membrane as a helical span at residues 148 to 168; that stretch reads FFIQFLIYCTVYSILVLILSS. The Lumenal segment spans residues 169–188; the sequence is MEIYTWFKGEFFEVELINFT. A helical membrane pass occupies residues 189-209; that stretch reads LLSLWLLALVVSISITIFTVF. The Cytoplasmic segment spans residues 210 to 332; sequence SISQVCQNQT…SLDVDRSNFV (123 aa).

It belongs to the DHHC palmitoyltransferase family. PFA3 subfamily. Post-translationally, autopalmitoylated.

It is found in the vacuole membrane. It carries out the reaction L-cysteinyl-[protein] + hexadecanoyl-CoA = S-hexadecanoyl-L-cysteinyl-[protein] + CoA. In terms of biological role, palmitoyltransferase specific for VAC8. Palmitoylates VAC8 at one or more of its N-terminal cysteine residues, which is required for its proper membrane localization. In Candida glabrata (strain ATCC 2001 / BCRC 20586 / JCM 3761 / NBRC 0622 / NRRL Y-65 / CBS 138) (Yeast), this protein is Palmitoyltransferase PFA3 (PFA3).